A 193-amino-acid chain; its full sequence is UPF0301 protein SCO2948 (193 aa).

It belongs to the UPF0301 (AlgH) family.

This Streptomyces coelicolor (strain ATCC BAA-471 / A3(2) / M145) protein is UPF0301 protein SCO2948.